A 102-amino-acid polypeptide reads, in one-letter code: Large ribosomal subunit protein bL21 (102 aa).

Belongs to the bacterial ribosomal protein bL21 family. In terms of assembly, part of the 50S ribosomal subunit. Contacts protein L20.

In terms of biological role, this protein binds to 23S rRNA in the presence of protein L20. In Phytoplasma mali (strain AT), this protein is Large ribosomal subunit protein bL21.